The chain runs to 1048 residues: Probable histidine kinase 2 (1048 aa).

Over 1–16 (MREVEEVSKWRRRCCY) the chain is Cytoplasmic. A helical membrane pass occupies residues 17–37 (FWILFPLAVIATCMTITVVTF). At 38-336 (CSSTMYMTEV…AMVGVFRRGG (299 aa)) the chain is on the extracellular side. Residues 337–357 (VTMVAVACAAAAAATVACVLM) form a helical membrane-spanning segment. Residues 358–1048 (ARALRRAVAR…AVHGVCKGKN (691 aa)) are Cytoplasmic-facing. One can recognise a Histidine kinase domain in the interval 398–662 (SASHDIRSAL…CFGFNVLLKT (265 aa)). His401 bears the Phosphohistidine; by autocatalysis mark. Residues 912–1044 (HVLLVEDTLV…RIVEAVHGVC (133 aa)) enclose the Response regulatory domain. The residue at position 975 (Asp975) is a 4-aspartylphosphate.

Post-translationally, activation probably requires a transfer of a phosphate group between a His in the transmitter domain and an Asp of the receiver domain.

The protein localises to the cell membrane. It carries out the reaction ATP + protein L-histidine = ADP + protein N-phospho-L-histidine.. Its function is as follows. Cytokinin receptor related to bacterial two-component regulators. Functions as a histidine kinase and transmits the stress signal to a downstream MAPK cascade. The chain is Probable histidine kinase 2 from Oryza sativa subsp. indica (Rice).